The chain runs to 158 residues: Lipoprotein signal peptidase (158 aa).

3 helical membrane passes run 4–24 (KYYITISLIVAIAILIIDQVT), 63–83 (KMGFFYIITIVILIVLVLFYI), and 88–108 (YNLFMQVAISLLFAGALGNFI). Residues Asp-118 and Asp-136 contribute to the active site. Residues 131-151 (IFNVADSSLTIGVLFIIIALL) traverse the membrane as a helical segment.

It belongs to the peptidase A8 family.

It is found in the cell membrane. The enzyme catalyses Release of signal peptides from bacterial membrane prolipoproteins. Hydrolyzes -Xaa-Yaa-Zaa-|-(S,diacylglyceryl)Cys-, in which Xaa is hydrophobic (preferably Leu), and Yaa (Ala or Ser) and Zaa (Gly or Ala) have small, neutral side chains.. It functions in the pathway protein modification; lipoprotein biosynthesis (signal peptide cleavage). Functionally, this protein specifically catalyzes the removal of signal peptides from prolipoproteins. The sequence is that of Lipoprotein signal peptidase from Staphylococcus haemolyticus (strain JCSC1435).